The chain runs to 86 residues: Cell division topological specificity factor (86 aa).

The protein belongs to the MinE family.

Its function is as follows. Prevents the cell division inhibition by proteins MinC and MinD at internal division sites while permitting inhibition at polar sites. This ensures cell division at the proper site by restricting the formation of a division septum at the midpoint of the long axis of the cell. In Parasynechococcus marenigrum (strain WH8102), this protein is Cell division topological specificity factor.